Here is a 156-residue protein sequence, read N- to C-terminus: Cell division protein SepF (156 aa).

A disordered region spans residues 15–58; that stretch reads SDVVPEDEDDEVIDEEPESSFDTDRSVTPIPAASTQPSTSQRKS. The segment covering 18 to 35 has biased composition (acidic residues); the sequence is VPEDEDDEVIDEEPESSF. Polar residues predominate over residues 47 to 57; it reads ASTQPSTSQRK.

It belongs to the SepF family. As to quaternary structure, homodimer. Interacts with FtsZ.

It is found in the cytoplasm. Functionally, cell division protein that is part of the divisome complex and is recruited early to the Z-ring. Probably stimulates Z-ring formation, perhaps through the cross-linking of FtsZ protofilaments. Its function overlaps with FtsA. The sequence is that of Cell division protein SepF from Bifidobacterium animalis subsp. lactis (strain AD011).